A 127-amino-acid polypeptide reads, in one-letter code: Mu-like prophage FluMu protein gp41 (127 aa).

The interval 107–127 (VSRGRLDTADQETGKDLSAVS) is disordered. A compositionally biased stretch (basic and acidic residues) spans 110-121 (GRLDTADQETGK).

The protein to phage Mu protein gp41.

This chain is Mu-like prophage FluMu protein gp41, found in Haemophilus influenzae (strain ATCC 51907 / DSM 11121 / KW20 / Rd).